The sequence spans 990 residues: Bifunctional glutamine synthetase adenylyltransferase/adenylyl-removing enzyme (990 aa).

The adenylyl removase stretch occupies residues 1–474 (MIFSAITADL…HYAKLFEGDP (474 aa)). The adenylyl transferase stretch occupies residues 478–990 (AKLPPVDYGA…FNRLIGGEDA (513 aa)).

This sequence belongs to the GlnE family. The cofactor is Mg(2+).

It carries out the reaction [glutamine synthetase]-O(4)-(5'-adenylyl)-L-tyrosine + phosphate = [glutamine synthetase]-L-tyrosine + ADP. It catalyses the reaction [glutamine synthetase]-L-tyrosine + ATP = [glutamine synthetase]-O(4)-(5'-adenylyl)-L-tyrosine + diphosphate. Functionally, involved in the regulation of glutamine synthetase GlnA, a key enzyme in the process to assimilate ammonia. When cellular nitrogen levels are high, the C-terminal adenylyl transferase (AT) inactivates GlnA by covalent transfer of an adenylyl group from ATP to specific tyrosine residue of GlnA, thus reducing its activity. Conversely, when nitrogen levels are low, the N-terminal adenylyl removase (AR) activates GlnA by removing the adenylyl group by phosphorolysis, increasing its activity. The regulatory region of GlnE binds the signal transduction protein PII (GlnB) which indicates the nitrogen status of the cell. This is Bifunctional glutamine synthetase adenylyltransferase/adenylyl-removing enzyme from Rhodopseudomonas palustris (strain TIE-1).